A 330-amino-acid polypeptide reads, in one-letter code: Carbonic anhydrase (330 aa).

A chloroplast transit peptide-like region spans residues 1-109 (MSAASAFAMN…AATRIDQITA (109 aa)).

The protein belongs to the beta-class carbonic anhydrase family.

The protein localises to the cytoplasm. The catalysed reaction is hydrogencarbonate + H(+) = CO2 + H2O. Its function is as follows. Reversible hydration of carbon dioxide. This is Carbonic anhydrase from Flaveria bidentis (Coastal plain yellowtops).